We begin with the raw amino-acid sequence, 145 residues long: Trafficking protein particle complex subunit 1 (145 aa).

Belongs to the TRAPP small subunits family. BET5 subfamily. Part of the multisubunit transport protein particle (TRAPP) complex. The heterodimer TRAPPC6B-TRAPPC3 interacts with TRAPPC1 likely providing a core for TRAPP complex formation.

The protein localises to the golgi apparatus. Its subcellular location is the cis-Golgi network. It is found in the endoplasmic reticulum. Its function is as follows. May play a role in vesicular transport from endoplasmic reticulum to Golgi. This chain is Trafficking protein particle complex subunit 1 (TRAPPC1), found in Bos taurus (Bovine).